The chain runs to 102 residues: UPF0213 protein XAC3202 (102 aa).

The region spanning 5 to 80 (KPWHLYLLLC…KRLPRARKLA (76 aa)) is the GIY-YIG domain.

This sequence belongs to the UPF0213 family.

This chain is UPF0213 protein XAC3202, found in Xanthomonas axonopodis pv. citri (strain 306).